A 414-amino-acid polypeptide reads, in one-letter code: Snake venom metalloproteinase atrolysin-B (414 aa).

Positions 1–20 (MIEVLLVTICLAVFPYQGSS) are cleaved as a signal peptide. Residues 21–190 (IILESGNVND…KASDLNLNPD (170 aa)) constitute a propeptide that is removed on maturation. Pyrrolidone carboxylic acid is present on Q191. The Peptidase M12B domain maps to 197 to 393 (RYIELVVVAD…YKPQCILNKP (197 aa)). Ca(2+) contacts are provided by E200 and D284. 2 cysteine pairs are disulfide-bonded: C308/C388 and C348/C355. H333 is a Zn(2+) binding site. E334 is an active-site residue. Residues H337 and H343 each contribute to the Zn(2+) site. Residues C388, N391, V403, N406, L408, E410, and E413 each contribute to the Ca(2+) site. The propeptide occupies 394–414 (LRIDPVSTPVSGNELLEAGEE).

Belongs to the venom metalloproteinase (M12B) family. P-I subfamily. As to quaternary structure, monomer. It depends on Zn(2+) as a cofactor. The N-terminus is blocked. In terms of tissue distribution, expressed by the venom gland.

The protein localises to the secreted. The enzyme catalyses Cleavage of 5-His-|-Leu-6, 10-His-|-Leu-11, 14-Ala-|-Leu-15, 16-Tyr-|-Leu-17 and 23-Gly-|-Phe-24 of insulin B chain. Identical to the cleavage of insulin B chain by atrolysin C. Also cleaves Xaa-|-Ser bonds in glucagon.. Its function is as follows. Snake venom metalloproteinase that impairs hemostasis in the envenomed animal. This is Snake venom metalloproteinase atrolysin-B from Crotalus atrox (Western diamondback rattlesnake).